Reading from the N-terminus, the 307-residue chain is Transmembrane protein 200B (307 aa).

The tract at residues 1–38 is disordered; it reads MTAGSPEECGEVRRSPEGRVSRLGRRLGRRRRPRSPPE. Residues 10 to 20 show a composition bias toward basic and acidic residues; sequence GEVRRSPEGRV. The span at 22 to 34 shows a compositional bias: basic residues; that stretch reads RLGRRLGRRRRPR. A helical transmembrane segment spans residues 53 to 73; it reads GAFAALGALVVLVGMGIAVAG. The disordered stretch occupies residues 81 to 111; the sequence is APGSRAANASSPQMSELRREGRGGGRAHGPH. Residue Asn-88 is glycosylated (N-linked (GlcNAc...) asparagine). Residues 96–111 are compositionally biased toward basic and acidic residues; sequence ELRREGRGGGRAHGPH. The helical transmembrane segment at 116–136 threads the bilayer; that stretch reads LLGPVIMGVGLFVFICANTLL. Positions 180-211 are disordered; it reads AVGCAEPEIWDPSPRRGTSPVPSVRSLRSEPA.

It belongs to the TMEM200 family.

It localises to the membrane. The chain is Transmembrane protein 200B (TMEM200B) from Homo sapiens (Human).